We begin with the raw amino-acid sequence, 470 residues long: Ribulose bisphosphate carboxylase large chain (470 aa).

Asparagine 115 and threonine 165 together coordinate substrate. Lysine 167 acts as the Proton acceptor in catalysis. Position 169 (lysine 169) interacts with substrate. Lysine 193, aspartate 195, and glutamate 196 together coordinate Mg(2+). The residue at position 193 (lysine 193) is an N6-carboxylysine. Histidine 286 functions as the Proton acceptor in the catalytic mechanism. 3 residues coordinate substrate: arginine 287, histidine 319, and serine 371.

This sequence belongs to the RuBisCO large chain family. Type I subfamily. In terms of assembly, heterohexadecamer of 8 large chains and 8 small chains. Forms a CsoS2-CsoS1-RuBisCO complex. The cofactor is Mg(2+).

The protein localises to the carboxysome. It catalyses the reaction 2 (2R)-3-phosphoglycerate + 2 H(+) = D-ribulose 1,5-bisphosphate + CO2 + H2O. The enzyme catalyses D-ribulose 1,5-bisphosphate + O2 = 2-phosphoglycolate + (2R)-3-phosphoglycerate + 2 H(+). RuBisCO catalyzes two reactions: the carboxylation of D-ribulose 1,5-bisphosphate, the primary event in carbon dioxide fixation, as well as the oxidative fragmentation of the pentose substrate in the photorespiration process. Both reactions occur simultaneously and in competition at the same active site. The sequence is that of Ribulose bisphosphate carboxylase large chain from Prochlorococcus marinus (strain MIT 9313).